The following is a 226-amino-acid chain: MNSIEFPLRDRTTQNSVISTTLNELSNWSRLSSLWPLLYGTSCCFIEFASLIGSRFDFDRYGLVPRSSPRQADLILTAGTVTMKMAPSLVRLYEQMPEPKYVIAIGACTITGGMFSTDSYSTVRGVDKLIPVDVYLPGCPPKPEAVIDAITKLRKKISREIYEKQIRSQRENKNRFFTTNHKFHVGRSTQTGNYDQGFFFQPPSTSEISLTHFSNIKKRVQYPPTK.

4 residues coordinate [4Fe-4S] cluster: C43, C44, C108, and C139.

It belongs to the complex I 20 kDa subunit family. NDH is composed of at least 16 different subunits, 5 of which are encoded in the nucleus. The cofactor is [4Fe-4S] cluster.

It is found in the plastid. It localises to the chloroplast thylakoid membrane. It catalyses the reaction a plastoquinone + NADH + (n+1) H(+)(in) = a plastoquinol + NAD(+) + n H(+)(out). The catalysed reaction is a plastoquinone + NADPH + (n+1) H(+)(in) = a plastoquinol + NADP(+) + n H(+)(out). Its function is as follows. NDH shuttles electrons from NAD(P)H:plastoquinone, via FMN and iron-sulfur (Fe-S) centers, to quinones in the photosynthetic chain and possibly in a chloroplast respiratory chain. The immediate electron acceptor for the enzyme in this species is believed to be plastoquinone. Couples the redox reaction to proton translocation, and thus conserves the redox energy in a proton gradient. This is NAD(P)H-quinone oxidoreductase subunit K, chloroplastic from Lupinus luteus (European yellow lupine).